The primary structure comprises 111 residues: Photosystem II reaction center Psb28 protein (111 aa).

This sequence belongs to the Psb28 family. Part of the photosystem II complex.

It localises to the cellular thylakoid membrane. The polypeptide is Photosystem II reaction center Psb28 protein (Crocosphaera subtropica (strain ATCC 51142 / BH68) (Cyanothece sp. (strain ATCC 51142))).